A 197-amino-acid chain; its full sequence is Glycerol-3-phosphate acyltransferase (197 aa).

4 helical membrane-spanning segments follow: residues 1 to 21 (MTALILLLAYLLGSIPFGLLV), 69 to 89 (LPMLFSVPVHPLLAGAIAVVG), 110 to 130 (VMLFYSPLFFLSLIAVFLVVL), and 152 to 172 (VFFTDDIPLTVAVLLLASFIF).

It belongs to the PlsY family. In terms of assembly, probably interacts with PlsX.

Its subcellular location is the cell membrane. The catalysed reaction is an acyl phosphate + sn-glycerol 3-phosphate = a 1-acyl-sn-glycero-3-phosphate + phosphate. The protein operates within lipid metabolism; phospholipid metabolism. Its function is as follows. Catalyzes the transfer of an acyl group from acyl-phosphate (acyl-PO(4)) to glycerol-3-phosphate (G3P) to form lysophosphatidic acid (LPA). This enzyme utilizes acyl-phosphate as fatty acyl donor, but not acyl-CoA or acyl-ACP. In Geobacillus kaustophilus (strain HTA426), this protein is Glycerol-3-phosphate acyltransferase.